We begin with the raw amino-acid sequence, 363 residues long: Spermidine/putrescine import ATP-binding protein PotA (363 aa).

The 231-residue stretch at 4 to 234 (LELRNVIRRF…PANRFIADFI (231 aa)) folds into the ABC transporter domain. 36–43 (GPSGCGKT) is a binding site for ATP.

Belongs to the ABC transporter superfamily. Spermidine/putrescine importer (TC 3.A.1.11.1) family. The complex is composed of two ATP-binding proteins (PotA), two transmembrane proteins (PotB and PotC) and a solute-binding protein (PotD).

The protein resides in the cell inner membrane. It carries out the reaction ATP + H2O + polyamine-[polyamine-binding protein]Side 1 = ADP + phosphate + polyamineSide 2 + [polyamine-binding protein]Side 1.. In terms of biological role, part of the ABC transporter complex PotABCD involved in spermidine/putrescine import. Responsible for energy coupling to the transport system. This chain is Spermidine/putrescine import ATP-binding protein PotA, found in Nitrosomonas eutropha (strain DSM 101675 / C91 / Nm57).